Here is a 407-residue protein sequence, read N- to C-terminus: Peptidase T (407 aa).

His82 contributes to the Zn(2+) binding site. Residue Asp84 is part of the active site. Asp143 serves as a coordination point for Zn(2+). Glu177 serves as the catalytic Proton acceptor. Positions 178, 200, and 382 each coordinate Zn(2+).

Belongs to the peptidase M20B family. Requires Zn(2+) as cofactor.

The protein resides in the cytoplasm. The enzyme catalyses Release of the N-terminal residue from a tripeptide.. Functionally, cleaves the N-terminal amino acid of tripeptides. This Streptococcus pyogenes serotype M1 protein is Peptidase T.